We begin with the raw amino-acid sequence, 92 residues long: Small ribosomal subunit protein bS20 (92 aa).

The disordered stretch occupies residues 1-25; the sequence is MANSAQARKRARQAAKANSHNSALR.

The protein belongs to the bacterial ribosomal protein bS20 family.

Binds directly to 16S ribosomal RNA. This is Small ribosomal subunit protein bS20 from Paraburkholderia phymatum (strain DSM 17167 / CIP 108236 / LMG 21445 / STM815) (Burkholderia phymatum).